Reading from the N-terminus, the 443-residue chain is Crinkler effector protein 161 (443 aa).

The first 17 residues, 1–17, serve as a signal peptide directing secretion; the sequence is MVKLSCVIVGVPGDPFQ. The segment at 18 to 56 is LQLFLAK domain; sequence VEIDEICELVAGLKDAIKKEKPDSIKCDADKLQLFKAAK. Residues 57 to 126 are DWL domain; it reads EDRTFSASGA…GMESPSISQI (70 aa). The HVLVXXP motif signature appears at 127-133; that stretch reads HVLVVLP. The effector domain stretch occupies residues 134-439; that stretch reads EDSESEGGTS…RSMPGYCCAN (306 aa). 2 consecutive short sequence motifs (nuclear localization signal) follow at residues 161–170 and 384–393; these read ADKKRKRYWH and HQPLKRLKLS.

This sequence belongs to the Crinkler effector family.

Its subcellular location is the secreted. The protein resides in the host nucleus. In terms of biological role, secreted effector that exhibits strong cell death suppression activity and suppresses cell death induced by a variety of effectors including CRN63, Avh241 and Avr3a. Protects host plants from biotic and abiotic stresses such as salinity and drought by up-regulation of many defense-related genes, including ABC transporters, Cytochrome P450 monooxygenases and receptor-like kinases (RLKs). Also enhances resistance to Phytophtora pathogens. In Phytophthora sojae (strain P6497) (Soybean stem and root rot agent), this protein is Crinkler effector protein 161.